Consider the following 1176-residue polypeptide: Leucine--tRNA ligase, cytoplasmic (1176 aa).

Positions 52 and 54 each coordinate L-leucine. Residues histidine 60 to histidine 63 carry the 'HIGH' region motif. Residues proline 115–glycine 142 are disordered. Residues phenylalanine 117 to glutamate 126 show a composition bias toward acidic residues. Residues threonine 127–lysine 139 show a composition bias toward basic and acidic residues. A Phosphoserine modification is found at serine 167. The tract at residues glycine 260 to glutamate 509 is editing domain. Residues leucine 594 and serine 597 each coordinate L-leucine. A 'KMSKS' region motif is present at residues lysine 716–serine 720. Lysine 719 is an ATP binding site. Residue serine 720 is modified to Phosphoserine. N6-acetyllysine is present on residues lysine 970 and lysine 1047.

The protein belongs to the class-I aminoacyl-tRNA synthetase family.

The protein resides in the cytoplasm. It carries out the reaction tRNA(Leu) + L-leucine + ATP = L-leucyl-tRNA(Leu) + AMP + diphosphate. The catalysed reaction is L-methionyl-tRNA(Leu) + H2O = tRNA(Leu) + L-methionine + H(+). 5-fluoro-1,3-dihydro-1-hydroxy-1,2-benzoxaborole inhibits LARS1 by forming a covalent adduct with the 3' adenosine of tRNA(Leu) at the editing site, thus locking the enzyme in an inactive conformation. Aminoacyl-tRNA synthetase that catalyzes the specific attachment of leucine to its cognate tRNA (tRNA(Leu)). It performs tRNA aminoacylation in a two-step reaction: Leu is initially activated by ATP to form a leucyl-adenylate (Leu-AMP) intermediate; then the leucyl moiety is transferred to the acceptor 3' end of the tRNA to yield leucyl-tRNA. To improve the fidelity of catalytic reactions, it is also able to hydrolyze misactivated aminoacyl-adenylate intermediates (pre-transfer editing) and mischarged aminoacyl-tRNAs (post-transfer editing). This Pongo abelii (Sumatran orangutan) protein is Leucine--tRNA ligase, cytoplasmic (LARS1).